Consider the following 200-residue polypeptide: Lipopolysaccharide core heptose(II)-phosphate phosphatase (200 aa).

Residues 1 to 25 (MLAFCRSSLKSKKYFIILLALAAIA) form the signal peptide.

It belongs to the phosphoglycerate mutase family. Ais subfamily.

It is found in the periplasm. It functions in the pathway bacterial outer membrane biogenesis; lipopolysaccharide metabolism. Catalyzes the dephosphorylation of heptose(II) of the outer membrane lipopolysaccharide core. The sequence is that of Lipopolysaccharide core heptose(II)-phosphate phosphatase from Escherichia coli O7:K1 (strain IAI39 / ExPEC).